The primary structure comprises 723 residues: Tripartite motif-containing protein 42 (723 aa).

An RING-type zinc finger spans residues 146–192 (CPMCSRLRLHSFMLPCNHSLCEKCLRQLQKHAEVTENFFILICPVCD). B box-type zinc fingers lie at residues 235–280 (PILC…FVDT) and 285–326 (QDEK…TISL). Zn(2+) contacts are provided by cysteine 290, histidine 293, cysteine 313, and histidine 318. Positions 382–407 (KLRSILQEKEKIIMEQIENLEVSRQK) form a coiled coil. The region spanning 434 to 492 (LKETGQVAFLQSAKILVDQIEDGIQTTYRPDPQLRLHSINYVPLDFVELSSAIHELFPT) is the COS domain. Residues 603–701 (TPGPIVIYQT…DICKVVTPDG (99 aa)) enclose the Fibronectin type-III domain.

The protein belongs to the TRIM/RBCC family.

In Homo sapiens (Human), this protein is Tripartite motif-containing protein 42 (TRIM42).